A 128-amino-acid polypeptide reads, in one-letter code: Small ribosomal subunit protein uS12 (128 aa).

Positions 1-29 (MPTINQLIRKGREPKERKSKSPALMGNPQ) are disordered. Position 89 is a 3-methylthioaspartic acid (D89). The interval 106-128 (GVEGRRQGRSKYGAKRPKEGGKK) is disordered.

Belongs to the universal ribosomal protein uS12 family. As to quaternary structure, part of the 30S ribosomal subunit. Contacts proteins S8 and S17. May interact with IF1 in the 30S initiation complex.

Its function is as follows. With S4 and S5 plays an important role in translational accuracy. In terms of biological role, interacts with and stabilizes bases of the 16S rRNA that are involved in tRNA selection in the A site and with the mRNA backbone. Located at the interface of the 30S and 50S subunits, it traverses the body of the 30S subunit contacting proteins on the other side and probably holding the rRNA structure together. The combined cluster of proteins S8, S12 and S17 appears to hold together the shoulder and platform of the 30S subunit. In Dictyoglomus turgidum (strain DSM 6724 / Z-1310), this protein is Small ribosomal subunit protein uS12.